A 385-amino-acid chain; its full sequence is Leucine aminopeptidase 1 (385 aa).

The first 20 residues, 1–20 (MKLPSLLSLGVAASTTIVAA), serve as a signal peptide directing secretion. A propeptide spanning residues 21-87 (VPDQKPIGDT…FPKTFAQTTV (67 aa)) is cleaved from the precursor. Residue N177 is glycosylated (N-linked (GlcNAc...) asparagine). Positions 185, 204, 243, and 270 each coordinate Zn(2+). C319 and C323 form a disulfide bridge. H352 is a Zn(2+) binding site.

This sequence belongs to the peptidase M28 family. M28E subfamily. Monomer. Requires Zn(2+) as cofactor.

Its subcellular location is the secreted. Its function is as follows. Extracellular aminopeptidase that allows assimilation of proteinaceous substrates. This is Leucine aminopeptidase 1 (LAP1) from Ajellomyces capsulatus (strain NAm1 / WU24) (Darling's disease fungus).